Reading from the N-terminus, the 366-residue chain is Chorismate synthase (366 aa).

Arginine 48 is a binding site for NADP(+). FMN-binding positions include 125 to 127, 241 to 242, glycine 285, 300 to 304, and arginine 326; these read RSS, NA, and KPTSS.

Belongs to the chorismate synthase family. As to quaternary structure, homotetramer. FMNH2 serves as cofactor.

The enzyme catalyses 5-O-(1-carboxyvinyl)-3-phosphoshikimate = chorismate + phosphate. Its pathway is metabolic intermediate biosynthesis; chorismate biosynthesis; chorismate from D-erythrose 4-phosphate and phosphoenolpyruvate: step 7/7. Catalyzes the anti-1,4-elimination of the C-3 phosphate and the C-6 proR hydrogen from 5-enolpyruvylshikimate-3-phosphate (EPSP) to yield chorismate, which is the branch point compound that serves as the starting substrate for the three terminal pathways of aromatic amino acid biosynthesis. This reaction introduces a second double bond into the aromatic ring system. The polypeptide is Chorismate synthase (Ruegeria pomeroyi (strain ATCC 700808 / DSM 15171 / DSS-3) (Silicibacter pomeroyi)).